A 464-amino-acid polypeptide reads, in one-letter code: tRNA modification GTPase MnmE (464 aa).

Positions 25, 87, and 130 each coordinate (6S)-5-formyl-5,6,7,8-tetrahydrofolate. Positions 226 to 386 (GLSVVLAGQP…LRAELLRIAG (161 aa)) constitute a TrmE-type G domain. Position 236 (Asn-236) interacts with K(+). GTP is bound by residues 236-241 (NVGKSS), 255-261 (TPIAGTT), and 280-283 (DTAG). Ser-240 contributes to the Mg(2+) binding site. K(+) contacts are provided by Thr-255, Ile-257, and Thr-260. A Mg(2+)-binding site is contributed by Thr-261. Lys-464 lines the (6S)-5-formyl-5,6,7,8-tetrahydrofolate pocket.

The protein belongs to the TRAFAC class TrmE-Era-EngA-EngB-Septin-like GTPase superfamily. TrmE GTPase family. Homodimer. Heterotetramer of two MnmE and two MnmG subunits. Requires K(+) as cofactor.

Its subcellular location is the cytoplasm. Functionally, exhibits a very high intrinsic GTPase hydrolysis rate. Involved in the addition of a carboxymethylaminomethyl (cmnm) group at the wobble position (U34) of certain tRNAs, forming tRNA-cmnm(5)s(2)U34. This Burkholderia orbicola (strain MC0-3) protein is tRNA modification GTPase MnmE.